A 210-amino-acid chain; its full sequence is ATP phosphoribosyltransferase (210 aa).

It belongs to the ATP phosphoribosyltransferase family. Short subfamily. Heteromultimer composed of HisG and HisZ subunits.

The protein localises to the cytoplasm. The catalysed reaction is 1-(5-phospho-beta-D-ribosyl)-ATP + diphosphate = 5-phospho-alpha-D-ribose 1-diphosphate + ATP. Its pathway is amino-acid biosynthesis; L-histidine biosynthesis; L-histidine from 5-phospho-alpha-D-ribose 1-diphosphate: step 1/9. Functionally, catalyzes the condensation of ATP and 5-phosphoribose 1-diphosphate to form N'-(5'-phosphoribosyl)-ATP (PR-ATP). Has a crucial role in the pathway because the rate of histidine biosynthesis seems to be controlled primarily by regulation of HisG enzymatic activity. The protein is ATP phosphoribosyltransferase of Caldanaerobacter subterraneus subsp. tengcongensis (strain DSM 15242 / JCM 11007 / NBRC 100824 / MB4) (Thermoanaerobacter tengcongensis).